The sequence spans 278 residues: RsbT co-antagonist protein RsbRD (278 aa).

The STAS domain occupies 160-271 (SAPIMPITDG…QSLAKALANK (112 aa)). Phosphothreonine is present on threonine 181.

As to quaternary structure, probably present in the stressosome with RsbRA, RsbRB, RsbRC and RsbS. In terms of processing, phosphorylated by RsbT.

One of 4 functionally non-identical RsbR paralogs, it functions in the environmental signaling branch of the general stress response. In terms of biological role, negative regulator of sigma-B activity. Non-phosphorylated RsbS binds to RsbT, preventing its association with RsbU. Requires any one of RsbRA, RsbRB, RsbRC or RsbRD to sequester RsbT. When RsbS and the RsbR paralog(s) are phosphorylated, they release RsbT, which can then bind and activate RsbU. This chain is RsbT co-antagonist protein RsbRD (rsbRD), found in Bacillus subtilis (strain 168).